A 432-amino-acid polypeptide reads, in one-letter code: Glutamate-1-semialdehyde 2,1-aminomutase (432 aa).

Position 265 is an N6-(pyridoxal phosphate)lysine (Lys-265).

Belongs to the class-III pyridoxal-phosphate-dependent aminotransferase family. HemL subfamily. Homodimer. It depends on pyridoxal 5'-phosphate as a cofactor.

The protein localises to the cytoplasm. The catalysed reaction is (S)-4-amino-5-oxopentanoate = 5-aminolevulinate. Its pathway is porphyrin-containing compound metabolism; protoporphyrin-IX biosynthesis; 5-aminolevulinate from L-glutamyl-tRNA(Glu): step 2/2. The chain is Glutamate-1-semialdehyde 2,1-aminomutase from Histophilus somni (strain 129Pt) (Haemophilus somnus).